We begin with the raw amino-acid sequence, 196 residues long: Probable malonic semialdehyde reductase RutE (196 aa).

It belongs to the nitroreductase family. HadB/RutE subfamily. It depends on FMN as a cofactor.

The catalysed reaction is 3-hydroxypropanoate + NADP(+) = 3-oxopropanoate + NADPH + H(+). Functionally, may reduce toxic product malonic semialdehyde to 3-hydroxypropionic acid, which is excreted. In Enterobacter sp. (strain 638), this protein is Probable malonic semialdehyde reductase RutE.